Reading from the N-terminus, the 95-residue chain is Aspartyl/glutamyl-tRNA(Asn/Gln) amidotransferase subunit C (95 aa).

Belongs to the GatC family. In terms of assembly, heterotrimer of A, B and C subunits.

It catalyses the reaction L-glutamyl-tRNA(Gln) + L-glutamine + ATP + H2O = L-glutaminyl-tRNA(Gln) + L-glutamate + ADP + phosphate + H(+). The enzyme catalyses L-aspartyl-tRNA(Asn) + L-glutamine + ATP + H2O = L-asparaginyl-tRNA(Asn) + L-glutamate + ADP + phosphate + 2 H(+). Functionally, allows the formation of correctly charged Asn-tRNA(Asn) or Gln-tRNA(Gln) through the transamidation of misacylated Asp-tRNA(Asn) or Glu-tRNA(Gln) in organisms which lack either or both of asparaginyl-tRNA or glutaminyl-tRNA synthetases. The reaction takes place in the presence of glutamine and ATP through an activated phospho-Asp-tRNA(Asn) or phospho-Glu-tRNA(Gln). The polypeptide is Aspartyl/glutamyl-tRNA(Asn/Gln) amidotransferase subunit C (Pseudomonas fluorescens (strain SBW25)).